The sequence spans 435 residues: ATP-dependent protease ATPase subunit HslU (435 aa).

ATP is bound by residues Ile18, 60 to 65 (GVGKTE), Asp248, Glu313, and Arg385.

It belongs to the ClpX chaperone family. HslU subfamily. In terms of assembly, a double ring-shaped homohexamer of HslV is capped on each side by a ring-shaped HslU homohexamer. The assembly of the HslU/HslV complex is dependent on binding of ATP.

The protein localises to the cytoplasm. In terms of biological role, ATPase subunit of a proteasome-like degradation complex; this subunit has chaperone activity. The binding of ATP and its subsequent hydrolysis by HslU are essential for unfolding of protein substrates subsequently hydrolyzed by HslV. HslU recognizes the N-terminal part of its protein substrates and unfolds these before they are guided to HslV for hydrolysis. This chain is ATP-dependent protease ATPase subunit HslU, found in Sinorhizobium medicae (strain WSM419) (Ensifer medicae).